A 545-amino-acid chain; its full sequence is Eukaryotic translation initiation factor 3 subunit D-2 (545 aa).

The segment covering 99–113 has biased composition (basic residues); sequence FRGNIRNNPRTRGRT. The tract at residues 99-158 is disordered; it reads FRGNIRNNPRTRGRTGRGGAVTGIGGNQPGVGVNERTKYGKGRDNRRQMGRRFGRNAPTR. Over residues 114–127 the composition is skewed to gly residues; that stretch reads GRGGAVTGIGGNQP. Over residues 133 to 145 the composition is skewed to basic and acidic residues; it reads ERTKYGKGRDNRR. The tract at residues 287 to 301 is RNA gate; it reads QFDLLTVNETALEPP.

This sequence belongs to the eIF-3 subunit D family. As to quaternary structure, component of the eukaryotic translation initiation factor 3 (eIF-3) complex. The eIF-3 complex interacts with pix.

It is found in the cytoplasm. MRNA cap-binding component of the eukaryotic translation initiation factor 3 (eIF-3) complex, which is involved in protein synthesis of a specialized repertoire of mRNAs and, together with other initiation factors, stimulates binding of mRNA and methionyl-tRNAi to the 40S ribosome. The eIF-3 complex specifically targets and initiates translation of a subset of mRNAs involved in cell proliferation. In the eIF-3 complex, eif3d specifically recognizes and binds the 7-methylguanosine cap of a subset of mRNAs. This is Eukaryotic translation initiation factor 3 subunit D-2 from Drosophila persimilis (Fruit fly).